The following is a 301-amino-acid chain: Probable alpha-L-glutamate ligase (301 aa).

The ATP-grasp domain maps to Leu104–Glu287. Residues Lys141, Glu178–Phe179, Asp187, and Arg211–Asn213 each bind ATP. Positions 248, 260, and 262 each coordinate Mg(2+). 3 residues coordinate Mn(2+): Asp248, Glu260, and Asn262.

Belongs to the RimK family. Mg(2+) serves as cofactor. The cofactor is Mn(2+).

This chain is Probable alpha-L-glutamate ligase, found in Vibrio atlanticus (strain LGP32) (Vibrio splendidus (strain Mel32)).